Reading from the N-terminus, the 270-residue chain is S-methyl-5'-thioadenosine phosphorylase (270 aa).

Phosphate-binding positions include S16, 58–59 (RH), and 91–92 (SA). Intrachain disulfides connect C138-C205, C200-C262, and C259-C261. M190 lines the substrate pocket. A phosphate-binding site is contributed by T191. 214 to 216 (DYD) contacts substrate.

This sequence belongs to the PNP/MTAP phosphorylase family. MTAP subfamily. Homohexamer. Dimer of a homotrimer.

The enzyme catalyses S-methyl-5'-thioadenosine + phosphate = 5-(methylsulfanyl)-alpha-D-ribose 1-phosphate + adenine. It functions in the pathway amino-acid biosynthesis; L-methionine biosynthesis via salvage pathway; S-methyl-5-thio-alpha-D-ribose 1-phosphate from S-methyl-5'-thioadenosine (phosphorylase route): step 1/1. Catalyzes the reversible phosphorylation of S-methyl-5'-thioadenosine (MTA) to adenine and 5-methylthioribose-1-phosphate. Involved in the breakdown of MTA, a major by-product of polyamine biosynthesis. Responsible for the first step in the methionine salvage pathway after MTA has been generated from S-adenosylmethionine. Has broad substrate specificity with 6-aminopurine nucleosides as preferred substrates. The sequence is that of S-methyl-5'-thioadenosine phosphorylase from Saccharolobus solfataricus (strain ATCC 35092 / DSM 1617 / JCM 11322 / P2) (Sulfolobus solfataricus).